The chain runs to 297 residues: ATP synthase gamma chain (297 aa).

It belongs to the ATPase gamma chain family. As to quaternary structure, F-type ATPases have 2 components, CF(1) - the catalytic core - and CF(0) - the membrane proton channel. CF(1) has five subunits: alpha(3), beta(3), gamma(1), delta(1), epsilon(1). CF(0) has three main subunits: a, b and c.

It localises to the cell membrane. Produces ATP from ADP in the presence of a proton gradient across the membrane. The gamma chain is believed to be important in regulating ATPase activity and the flow of protons through the CF(0) complex. The sequence is that of ATP synthase gamma chain from Beutenbergia cavernae (strain ATCC BAA-8 / DSM 12333 / CCUG 43141 / JCM 11478 / NBRC 16432 / NCIMB 13614 / HKI 0122).